A 380-amino-acid polypeptide reads, in one-letter code: Zinc metalloproteinase-like protein nas-21 (380 aa).

A signal peptide spans 1–24 (MNYFITFFFMHIAVLNFYFRFSNG). Positions 46–234 (QALRMDNEPR…LMINEYYQCS (189 aa)) constitute a Peptidase M12A domain. N87 carries N-linked (GlcNAc...) asparagine glycosylation. Intrachain disulfides connect C90–C233 and C110–C130. E138 is an active-site residue. Residues N253, N269, N283, and N304 are each glycosylated (N-linked (GlcNAc...) asparagine).

The protein resides in the secreted. In terms of biological role, may lack metalloprotease activity. This Caenorhabditis elegans protein is Zinc metalloproteinase-like protein nas-21 (nas-21).